The following is a 397-amino-acid chain: S-adenosylmethionine synthase (397 aa).

ATP is bound at residue His16. A Mg(2+)-binding site is contributed by Asp18. Glu44 contributes to the K(+) binding site. L-methionine contacts are provided by Glu57 and Gln100. The tract at residues 100-110 (QSPDIAQGVNE) is flexible loop. Residues 175 to 177 (DAK), 242 to 243 (RF), Asp251, 257 to 258 (RK), Ala274, and Lys278 each bind ATP. Asp251 is an L-methionine binding site. Residue Lys282 coordinates L-methionine.

It belongs to the AdoMet synthase family. As to quaternary structure, homotetramer; dimer of dimers. Mg(2+) is required as a cofactor. The cofactor is K(+).

The protein resides in the cytoplasm. The enzyme catalyses L-methionine + ATP + H2O = S-adenosyl-L-methionine + phosphate + diphosphate. Its pathway is amino-acid biosynthesis; S-adenosyl-L-methionine biosynthesis; S-adenosyl-L-methionine from L-methionine: step 1/1. Its function is as follows. Catalyzes the formation of S-adenosylmethionine (AdoMet) from methionine and ATP. The overall synthetic reaction is composed of two sequential steps, AdoMet formation and the subsequent tripolyphosphate hydrolysis which occurs prior to release of AdoMet from the enzyme. The protein is S-adenosylmethionine synthase of Streptococcus thermophilus (strain ATCC BAA-250 / LMG 18311).